Consider the following 1690-residue polypeptide: DNA-directed RNA polymerase subunit beta' (1690 aa).

Positions 63, 65, 78, and 81 each coordinate Zn(2+). Mg(2+)-binding residues include Asp753, Asp755, and Asp757. Zn(2+) contacts are provided by Cys1107, Cys1295, Cys1302, and Cys1305.

Belongs to the RNA polymerase beta' chain family. As to quaternary structure, the RNAP catalytic core consists of 2 alpha, 1 beta, 1 beta' and 1 omega subunit. When a sigma factor is associated with the core the holoenzyme is formed, which can initiate transcription. The cofactor is Mg(2+). It depends on Zn(2+) as a cofactor.

It catalyses the reaction RNA(n) + a ribonucleoside 5'-triphosphate = RNA(n+1) + diphosphate. In terms of biological role, DNA-dependent RNA polymerase catalyzes the transcription of DNA into RNA using the four ribonucleoside triphosphates as substrates. The sequence is that of DNA-directed RNA polymerase subunit beta' from Thermotoga petrophila (strain ATCC BAA-488 / DSM 13995 / JCM 10881 / RKU-1).